Here is a 198-residue protein sequence, read N- to C-terminus: Putative NADH dehydrogenase/NAD(P)H nitroreductase XOO4267 (198 aa).

This sequence belongs to the nitroreductase family. HadB/RutE subfamily. Requires FMN as cofactor.

This Xanthomonas oryzae pv. oryzae (strain KACC10331 / KXO85) protein is Putative NADH dehydrogenase/NAD(P)H nitroreductase XOO4267.